The sequence spans 199 residues: Thymidine kinase (199 aa).

ATP-binding positions include 9-16 (GAMSSGKS) and 93-96 (DEAQ). Glutamate 94 acts as the Proton acceptor in catalysis. Zn(2+) is bound by residues cysteine 151, cysteine 154, cysteine 188, and histidine 191.

The protein belongs to the thymidine kinase family. As to quaternary structure, homotetramer.

The protein localises to the cytoplasm. It catalyses the reaction thymidine + ATP = dTMP + ADP + H(+). The chain is Thymidine kinase from Lactobacillus johnsonii (strain CNCM I-12250 / La1 / NCC 533).